The following is a 228-amino-acid chain: uncharacterized protein (228 aa).

Disordered stretches follow at residues 1–62 (MQRP…VGRF) and 160–228 (SPRP…LSGV). The span at 13-33 (AASTRAPPRPSAPQQGRRQPS) shows a compositional bias: low complexity. Residues 167–176 (RGQQVTQDGP) are compositionally biased toward polar residues.

This is an uncharacterized protein from Homo sapiens (Human).